The primary structure comprises 150 residues: Large ribosomal subunit protein bL9 (150 aa).

It belongs to the bacterial ribosomal protein bL9 family.

Its function is as follows. Binds to the 23S rRNA. This Pectobacterium atrosepticum (strain SCRI 1043 / ATCC BAA-672) (Erwinia carotovora subsp. atroseptica) protein is Large ribosomal subunit protein bL9.